Consider the following 247-residue polypeptide: Probable transcriptional regulatory protein Dalk_2958 (247 aa).

The protein belongs to the TACO1 family.

It localises to the cytoplasm. The protein is Probable transcriptional regulatory protein Dalk_2958 of Desulfatibacillum aliphaticivorans.